The primary structure comprises 236 residues: Rho-related GTP-binding protein RhoV (236 aa).

The disordered stretch occupies residues 1 to 27 (MPPRELSEAESSPLRSPTPPPGRGSAS). Residue S25 is modified to Phosphoserine. GTP-binding positions include 38 to 45 (GDGAVGKS), 85 to 89 (DTAGQ), and 143 to 146 (TQAD). The S-palmitoyl cysteine moiety is linked to residue C234.

Belongs to the small GTPase superfamily. Rho family. In terms of assembly, interacts with PAK2. It depends on Mg(2+) as a cofactor.

The protein resides in the cell membrane. Its subcellular location is the endosome membrane. Its function is as follows. Plays a role in the control of the actin cytoskeleton via activation of the JNK pathway. This Bos taurus (Bovine) protein is Rho-related GTP-binding protein RhoV.